We begin with the raw amino-acid sequence, 463 residues long: Glycerol-3-phosphate acyltransferase, chloroplastic (463 aa).

The N-terminal 91 residues, 1 to 91, are a transit peptide targeting the chloroplast; it reads MSIFFSPSSP…AATQPSAGSD (91 aa). Disordered stretches follow at residues 18–37 and 65–95; these read NANP…TPPL and AETV…HGHS. 2 stretches are compositionally biased toward low complexity: residues 24 to 37 and 74 to 90; these read SPSS…TPPL and PSPS…SAGS. Positions 229-234 match the HXXXXD motif motif; that stretch reads HQTEAD.

Belongs to the GPAT/DAPAT family.

It localises to the plastid. Its subcellular location is the chloroplast stroma. It carries out the reaction sn-glycerol 3-phosphate + an acyl-CoA = a 1-acyl-sn-glycero-3-phosphate + CoA. The protein operates within phospholipid metabolism; CDP-diacylglycerol biosynthesis; CDP-diacylglycerol from sn-glycerol 3-phosphate: step 1/3. In terms of biological role, esterifies acyl-group from acyl-ACP to the sn-1 position of glycerol-3-phosphate. The enzyme from chilling-resistant plants discriminates against non-fluid palmitic acid and selects oleic acid whereas the enzyme from sensitive plants accepts both fatty acids. The protein is Glycerol-3-phosphate acyltransferase, chloroplastic of Carthamus tinctorius (Safflower).